Consider the following 908-residue polypeptide: DNA mismatch repair protein MutS (908 aa).

Residue 659 to 666 (GPNMAGKS) coordinates ATP.

The protein belongs to the DNA mismatch repair MutS family.

This protein is involved in the repair of mismatches in DNA. It is possible that it carries out the mismatch recognition step. This protein has a weak ATPase activity. The polypeptide is DNA mismatch repair protein MutS (Parvibaculum lavamentivorans (strain DS-1 / DSM 13023 / NCIMB 13966)).